The chain runs to 194 residues: dITP/XTP pyrophosphatase (194 aa).

Substrate is bound at residue 9–14; the sequence is THNPGK. Mg(2+) is bound by residues aspartate 40 and aspartate 69. The active-site Proton acceptor is aspartate 69. Substrate is bound by residues serine 70, 152–155, lysine 175, and 180–181; these read FGYD and HR.

It belongs to the HAM1 NTPase family. Homodimer. It depends on Mg(2+) as a cofactor.

It carries out the reaction XTP + H2O = XMP + diphosphate + H(+). It catalyses the reaction dITP + H2O = dIMP + diphosphate + H(+). The catalysed reaction is ITP + H2O = IMP + diphosphate + H(+). In terms of biological role, pyrophosphatase that catalyzes the hydrolysis of nucleoside triphosphates to their monophosphate derivatives, with a high preference for the non-canonical purine nucleotides XTP (xanthosine triphosphate), dITP (deoxyinosine triphosphate) and ITP. Seems to function as a house-cleaning enzyme that removes non-canonical purine nucleotides from the nucleotide pool, thus preventing their incorporation into DNA/RNA and avoiding chromosomal lesions. In Caulobacter vibrioides (strain ATCC 19089 / CIP 103742 / CB 15) (Caulobacter crescentus), this protein is dITP/XTP pyrophosphatase.